Reading from the N-terminus, the 440-residue chain is UDP-N-acetylglucosamine 1-carboxyvinyltransferase 1 (440 aa).

22–23 (KN) lines the phosphoenolpyruvate pocket. Arginine 93 contributes to the UDP-N-acetyl-alpha-D-glucosamine binding site. Cysteine 117 functions as the Proton donor in the catalytic mechanism. Position 117 is a 2-(S-cysteinyl)pyruvic acid O-phosphothioketal (cysteine 117). UDP-N-acetyl-alpha-D-glucosamine is bound by residues 122-126 (RPIDQ), aspartate 306, and valine 328.

This sequence belongs to the EPSP synthase family. MurA subfamily.

It is found in the cytoplasm. The enzyme catalyses phosphoenolpyruvate + UDP-N-acetyl-alpha-D-glucosamine = UDP-N-acetyl-3-O-(1-carboxyvinyl)-alpha-D-glucosamine + phosphate. It functions in the pathway cell wall biogenesis; peptidoglycan biosynthesis. In terms of biological role, cell wall formation. Adds enolpyruvyl to UDP-N-acetylglucosamine. In Halalkalibacterium halodurans (strain ATCC BAA-125 / DSM 18197 / FERM 7344 / JCM 9153 / C-125) (Bacillus halodurans), this protein is UDP-N-acetylglucosamine 1-carboxyvinyltransferase 1.